Consider the following 477-residue polypeptide: Sulfate adenylyltransferase subunit 1 (477 aa).

The tr-type G domain maps to 22–239; sequence KDMLRFITCG…TVQISHDAPL (218 aa). Positions 31–38 are G1; it reads GSVDDGKS. 31–38 contacts GTP; it reads GSVDDGKS. The tract at residues 89–93 is G2; sequence GITID. Positions 110-113 are G3; that stretch reads DCPG. GTP-binding positions include 110–114 and 165–168; these read DCPGH and NKMD. Residues 165 to 168 are G4; that stretch reads NKMD. A G5 region spans residues 202–204; sequence SAL.

It belongs to the TRAFAC class translation factor GTPase superfamily. Classic translation factor GTPase family. CysN/NodQ subfamily. Heterodimer composed of CysD, the smaller subunit, and CysN.

The catalysed reaction is sulfate + ATP + H(+) = adenosine 5'-phosphosulfate + diphosphate. It functions in the pathway sulfur metabolism; hydrogen sulfide biosynthesis; sulfite from sulfate: step 1/3. With CysD forms the ATP sulfurylase (ATPS) that catalyzes the adenylation of sulfate producing adenosine 5'-phosphosulfate (APS) and diphosphate, the first enzymatic step in sulfur assimilation pathway. APS synthesis involves the formation of a high-energy phosphoric-sulfuric acid anhydride bond driven by GTP hydrolysis by CysN coupled to ATP hydrolysis by CysD. The chain is Sulfate adenylyltransferase subunit 1 from Chromobacterium violaceum (strain ATCC 12472 / DSM 30191 / JCM 1249 / CCUG 213 / NBRC 12614 / NCIMB 9131 / NCTC 9757 / MK).